A 250-amino-acid polypeptide reads, in one-letter code: DNA polymerase sliding clamp (250 aa).

It belongs to the PCNA family. As to quaternary structure, homotrimer. The subunits circularize to form a toroid; DNA passes through its center. Replication factor C (RFC) is required to load the toroid on the DNA.

Sliding clamp subunit that acts as a moving platform for DNA processing. Responsible for tethering the catalytic subunit of DNA polymerase and other proteins to DNA during high-speed replication. This chain is DNA polymerase sliding clamp, found in Methanococcus maripaludis (strain DSM 14266 / JCM 13030 / NBRC 101832 / S2 / LL).